The following is a 937-amino-acid chain: Chromatin assembly factor 1 subunit A (937 aa).

The segment at 21-69 (RLPFKRLNPVPKEKHDAEAEGKKGKCSKSGLGQSKDSSTDTLHASTDNM) is disordered. Residues 31-43 (PKEKHDAEAEGKK) are compositionally biased toward basic and acidic residues. A compositionally biased stretch (polar residues) spans 59-69 (TDTLHASTDNM). The PxVxL motif signature appears at 213–226 (FEGKMPVVLLEDIM). Disordered stretches follow at residues 250-386 (SHEG…EKRK), 574-614 (VDSD…IPHG), 753-778 (GDTS…VPSK), 831-851 (SGKE…TPVS), and 910-937 (TVTE…SNTV). A compositionally biased stretch (low complexity) spans 255–269 (SVLTNSSLSSLSVSS). Over residues 301-386 (SSAEKEKLRL…KLRVKEEKRK (86 aa)) the composition is skewed to basic and acidic residues. Acidic residues-rich tracts occupy residues 574-586 (VDSD…EEPG) and 594-608 (GDDE…DDDG). The span at 756 to 766 (SPVSPNTSRPQ) shows a compositional bias: polar residues.

It belongs to the CHAF1A family. In terms of assembly, subunit of the CAF-1 complex that contains RBBP4, CHAF1B and CHAF1A. Interacts with CHAF1B, PCNA and RBBP4.

The protein localises to the nucleus. In terms of biological role, acts as a component of the histone chaperone complex chromatin assembly factor 1 (CAF-1), which assembles histone octamers onto DNA during replication and repair. CAF-1 performs the first step of the nucleosome assembly process, bringing newly synthesized histones H3 and H4 to replicating DNA; histones H2A/H2B can bind to this chromatin precursor subsequent to DNA replication to complete the histone octamer. The sequence is that of Chromatin assembly factor 1 subunit A (CHAF1A) from Gallus gallus (Chicken).